The primary structure comprises 26 residues: Peroxidase 1 (26 aa).

D15 lines the Ca(2+) pocket.

This sequence belongs to the peroxidase family. Classical plant (class III) peroxidase subfamily. Heme b is required as a cofactor. The cofactor is Ca(2+).

It is found in the secreted. The enzyme catalyses 2 a phenolic donor + H2O2 = 2 a phenolic radical donor + 2 H2O. Functionally, removal of H(2)O(2), oxidation of toxic reductants, biosynthesis and degradation of lignin, suberization, auxin catabolism, response to environmental stresses such as wounding, pathogen attack and oxidative stress. These functions might be dependent on each isozyme/isoform in each plant tissue. The protein is Peroxidase 1 of Vitis vinifera (Grape).